A 118-amino-acid chain; its full sequence is U-scoloptoxin(05)-Cw1a (118 aa).

A signal peptide spans 1 to 22 (MNPLNLSTFIVFTLFAASATTA).

Belongs to the scoloptoxin-05 family. Post-translationally, contains 5 disulfide bonds. As to expression, expressed by the venom gland.

The protein resides in the secreted. The chain is U-scoloptoxin(05)-Cw1a from Cormocephalus westwoodi (Westwood's green centipede).